Consider the following 24-residue polypeptide: Caerin-2.1 (24 aa).

Belongs to the frog skin active peptide (FSAP) family. Caerin subfamily. Expressed by the skin dorsal glands.

The protein resides in the secreted. Functionally, inhibits the formation of NO by neuronal nitric oxide synthase. This chain is Caerin-2.1, found in Litoria rothii (Roth's tree frog).